Here is a 564-residue protein sequence, read N- to C-terminus: NADPH oxidase 1 (564 aa).

Residues 1–9 (MGNWVVNHW) lie on the Cytoplasmic side of the membrane. A helical transmembrane segment spans residues 10–30 (FSVLFLVVWLGLNVFLFVDAF). Residues 31-44 (LKYEKADKYYYTRK) are Extracellular-facing. Residues 45-72 (ILGSTLACARASALCLNFNSTLILLPVC) traverse the membrane as a helical segment. The Ferric oxidoreductase domain occupies 54–283 (RASALCLNFN…LAPVILYICE (230 aa)). Topologically, residues 73–102 (RNLLSFLRGTCSFCSRTLRKQLDHNLTFHK) are cytoplasmic. 2 residues coordinate heme: His101 and His115. The chain crosses the membrane as a helical span at residues 103–123 (LVAYMICLHTAIHIIAHLFNF). Residues 124–168 (DCYSRSRQATDGSLASILSSLSHDEKKGGSWLNPIQSRNTTVEYV) lie on the Extracellular side of the membrane. A glycan (N-linked (GlcNAc...) asparagine) is linked at Asn162. Residues 169-189 (TFTSIAGLTGVIMTIALILMV) form a helical membrane-spanning segment. Residues 190–206 (TSATEFIRRSYFEVFWY) are Cytoplasmic-facing. The chain crosses the membrane as a helical span at residues 207 to 227 (THHLFIFYILGLGIHGIGGIV). Heme contacts are provided by His209 and His221. The Extracellular portion of the chain corresponds to 228–396 (RGQTEESMNE…TASEDVFQYE (169 aa)). The N-linked (GlcNAc...) asparagine glycan is linked to Asn236. The FAD-binding FR-type domain maps to 284–391 (RILRFYRSQQ…DGPFGTASED (108 aa)). Residue 338–344 (HPFTLTS) coordinates FAD. A helical membrane pass occupies residues 397 to 417 (VAVLVGAGIGVTPFASILKSI). Positions 397 to 536 (VAVLVGAGIG…GVFLCGPRTL (140 aa)) are interaction with NOXO1. Topologically, residues 418–564 (WYKFQCADHN…VQFYFNKENF (147 aa)) are cytoplasmic. Phosphothreonine is present on Thr430.

NOX1, NOXA1, NOXO1, RAC1 and CYBA forms a functional multimeric complex supporting reactive oxygen species (ROS) production. Interacts with NOXO1. Interacts (via FAD-binding FR-type domain) with ARHGEF7 (via PH domain). The phosphorylated form at Thr-430 interacts with NOXA1 with greater affinity. FAD is required as a cofactor. In terms of processing, phosphorylation at Thr-430 mediated by PKC/PRKBC positively regulates its interaction with NOXA1 and enzyme activity. In terms of tissue distribution, detected in colon, uterus, prostate, and colon carcinoma, but not in peripheral blood leukocytes.

It localises to the cell projection. The protein resides in the invadopodium membrane. The protein localises to the cell membrane. It catalyses the reaction NADPH + 2 O2 = 2 superoxide + NADP(+) + H(+). The oxidase activity is potentiated by NOXA1, NOXO1 and RAC1. In terms of biological role, NADPH oxidase that catalyzes the generation of superoxide from molecular oxygen utilizing NADPH as an electron donor. This chain is NADPH oxidase 1, found in Homo sapiens (Human).